The chain runs to 367 residues: Histidinol-phosphate aminotransferase 1 (367 aa).

At K229 the chain carries N6-(pyridoxal phosphate)lysine.

It belongs to the class-II pyridoxal-phosphate-dependent aminotransferase family. Histidinol-phosphate aminotransferase subfamily. In terms of assembly, homodimer. Pyridoxal 5'-phosphate serves as cofactor.

It carries out the reaction L-histidinol phosphate + 2-oxoglutarate = 3-(imidazol-4-yl)-2-oxopropyl phosphate + L-glutamate. The protein operates within amino-acid biosynthesis; L-histidine biosynthesis; L-histidine from 5-phospho-alpha-D-ribose 1-diphosphate: step 7/9. This chain is Histidinol-phosphate aminotransferase 1, found in Idiomarina loihiensis (strain ATCC BAA-735 / DSM 15497 / L2-TR).